Reading from the N-terminus, the 509-residue chain is tRNA (guanine(37)-N(1))-methyltransferase (509 aa).

The transit peptide at 1–57 (MVLWILWRPFGFSRRLLKLERHSITESKSLIPLAWTSLTQTLSESPGIFLLGQRKRF) directs the protein to the mitochondrion. S-adenosyl-L-methionine is bound by residues H289, 327–328 (DL), 355–356 (DG), and N387. A disordered region spans residues 478-509 (TKNPENHEDPPLKRQRTAEAFSDEKTQIASNT).

This sequence belongs to the class I-like SAM-binding methyltransferase superfamily. TRM5/TYW2 family. In terms of assembly, monomer.

Its subcellular location is the mitochondrion matrix. The protein localises to the nucleus. It localises to the cytoplasm. It catalyses the reaction guanosine(37) in tRNA + S-adenosyl-L-methionine = N(1)-methylguanosine(37) in tRNA + S-adenosyl-L-homocysteine + H(+). Functionally, involved in mitochondrial tRNA methylation. Specifically methylates the N1 position of guanosine-37 in various tRNAs. Methylation is not dependent on the nature of the nucleoside 5' of the target nucleoside. This is the first step in the biosynthesis of wybutosine (yW), a modified base adjacent to the anticodon of tRNAs and required for accurate decoding. The protein is tRNA (guanine(37)-N(1))-methyltransferase of Macaca mulatta (Rhesus macaque).